Consider the following 212-residue polypeptide: Calaxin (212 aa).

3 EF-hand domains span residues 65 to 100 (TDDM…FLRG), 101 to 136 (TLEE…SLLK), and 146 to 181 (GIKD…ETLL). The Ca(2+) site is built by aspartate 78, aspartate 80, aspartate 82, cysteine 84, glutamate 89, aspartate 114, asparagine 116, aspartate 118, glutamate 125, aspartate 159, aspartate 161, aspartate 163, lysine 165, and aspartate 170.

Component of the outer dynein arm-docking complex along with ODAD1, ODAD2, ODAD3 and ODAD4. In terms of tissue distribution, expressed in trachea multiciliated cells.

The protein resides in the cytoplasm. Its subcellular location is the cytoskeleton. The protein localises to the cilium axoneme. It localises to the cell projection. It is found in the cilium. The protein resides in the flagellum. Its function is as follows. Component of the outer dynein arm-docking complex (ODA-DC) that mediates outer dynein arms (ODA) binding onto the doublet microtubule. Seems to regulate the assembly of both ODAs and their axonemal docking complex onto ciliary microtubules. Regulates ciliary and flagellar motility and is required for cilia-driven determination of body laterality. This chain is Calaxin (CLXN), found in Bos taurus (Bovine).